The primary structure comprises 263 residues: Formamidopyrimidine-DNA glycosylase (263 aa).

Catalysis depends on Pro-2, which acts as the Schiff-base intermediate with DNA. The active-site Proton donor is Glu-3. Lys-59 (proton donor; for beta-elimination activity) is an active-site residue. DNA contacts are provided by His-93 and Arg-111. An FPG-type zinc finger spans residues Lys-229–Lys-263. The Proton donor; for delta-elimination activity role is filled by Arg-253.

Belongs to the FPG family. Monomer. Requires Zn(2+) as cofactor.

The enzyme catalyses Hydrolysis of DNA containing ring-opened 7-methylguanine residues, releasing 2,6-diamino-4-hydroxy-5-(N-methyl)formamidopyrimidine.. It catalyses the reaction 2'-deoxyribonucleotide-(2'-deoxyribose 5'-phosphate)-2'-deoxyribonucleotide-DNA = a 3'-end 2'-deoxyribonucleotide-(2,3-dehydro-2,3-deoxyribose 5'-phosphate)-DNA + a 5'-end 5'-phospho-2'-deoxyribonucleoside-DNA + H(+). Functionally, involved in base excision repair of DNA damaged by oxidation or by mutagenic agents. Acts as a DNA glycosylase that recognizes and removes damaged bases. Has a preference for oxidized purines, such as 7,8-dihydro-8-oxoguanine (8-oxoG). Has AP (apurinic/apyrimidinic) lyase activity and introduces nicks in the DNA strand. Cleaves the DNA backbone by beta-delta elimination to generate a single-strand break at the site of the removed base with both 3'- and 5'-phosphates. This is Formamidopyrimidine-DNA glycosylase from Carboxydothermus hydrogenoformans (strain ATCC BAA-161 / DSM 6008 / Z-2901).